Reading from the N-terminus, the 594-residue chain is UvrABC system protein C (594 aa).

The 78-residue stretch at 14–91 (DQPGCYLMKD…IKKYDPKYNI (78 aa)) folds into the GIY-YIG domain. The 36-residue stretch at 196–231 (KEVRSELEIKMYEASEKLEFERAKELRDQIAHIDAI) folds into the UVR domain.

This sequence belongs to the UvrC family. In terms of assembly, interacts with UvrB in an incision complex.

It is found in the cytoplasm. Functionally, the UvrABC repair system catalyzes the recognition and processing of DNA lesions. UvrC both incises the 5' and 3' sides of the lesion. The N-terminal half is responsible for the 3' incision and the C-terminal half is responsible for the 5' incision. In Bacillus cereus (strain G9842), this protein is UvrABC system protein C.